The sequence spans 262 residues: Probable lipoprotein EnvF (262 aa).

The first 25 residues, 1–25, serve as a signal peptide directing secretion; the sequence is MNKIHVTYKNLLLPITFIAATLISA. The N-palmitoyl cysteine moiety is linked to residue cysteine 26. Cysteine 26 is lipidated: S-diacylglycerol cysteine. The tract at residues 227–262 is disordered; the sequence is EAEKAQQLVEQSRKDIESQRKKAAGKMNEIQQTFKK. Over residues 237–246 the composition is skewed to basic and acidic residues; sequence QSRKDIESQR.

It localises to the cell membrane. The sequence is that of Probable lipoprotein EnvF (envF) from Salmonella typhimurium (strain LT2 / SGSC1412 / ATCC 700720).